The chain runs to 121 residues: Large ribosomal subunit protein uL14 (121 aa).

Belongs to the universal ribosomal protein uL14 family. In terms of assembly, part of the 50S ribosomal subunit. Forms a cluster with proteins L3 and L19. In the 70S ribosome, L14 and L19 interact and together make contacts with the 16S rRNA in bridges B5 and B8.

Functionally, binds to 23S rRNA. Forms part of two intersubunit bridges in the 70S ribosome. The protein is Large ribosomal subunit protein uL14 of Hydrogenobaculum sp. (strain Y04AAS1).